The chain runs to 91 residues: Small ribosomal subunit protein uS19 (91 aa).

The protein belongs to the universal ribosomal protein uS19 family.

Its function is as follows. Protein S19 forms a complex with S13 that binds strongly to the 16S ribosomal RNA. The sequence is that of Small ribosomal subunit protein uS19 from Ralstonia pickettii (strain 12J).